We begin with the raw amino-acid sequence, 347 residues long: N-acetyl-gamma-glutamyl-phosphate reductase (347 aa).

The active site involves Cys-152.

It belongs to the NAGSA dehydrogenase family. Type 1 subfamily.

It is found in the cytoplasm. It carries out the reaction N-acetyl-L-glutamate 5-semialdehyde + phosphate + NADP(+) = N-acetyl-L-glutamyl 5-phosphate + NADPH + H(+). Its pathway is amino-acid biosynthesis; L-arginine biosynthesis; N(2)-acetyl-L-ornithine from L-glutamate: step 3/4. Catalyzes the NADPH-dependent reduction of N-acetyl-5-glutamyl phosphate to yield N-acetyl-L-glutamate 5-semialdehyde. In Neisseria meningitidis serogroup C / serotype 2a (strain ATCC 700532 / DSM 15464 / FAM18), this protein is N-acetyl-gamma-glutamyl-phosphate reductase.